We begin with the raw amino-acid sequence, 373 residues long: 3 beta-hydroxysteroid dehydrogenase/Delta 5--&gt;4-isomerase (373 aa).

Tyr-155 acts as the Proton acceptor in catalysis. Lys-159 is a binding site for NAD(+). The helical transmembrane segment at Ile-288–Ile-308 threads the bilayer.

The protein belongs to the 3-beta-HSD family.

The protein localises to the endoplasmic reticulum membrane. Its subcellular location is the mitochondrion membrane. The enzyme catalyses a 3beta-hydroxy-Delta(5)-steroid + NAD(+) = a 3-oxo-Delta(5)-steroid + NADH + H(+). The catalysed reaction is a 3-oxo-Delta(5)-steroid = a 3-oxo-Delta(4)-steroid. It participates in lipid metabolism; steroid biosynthesis. 3-beta-HSD is a bifunctional enzyme, that catalyzes the oxidative conversion of Delta(5)-ene-3-beta-hydroxy steroid, and the oxidative conversion of ketosteroids. The 3-beta-HSD enzymatic system plays a crucial role in the biosynthesis of all classes of hormonal steroids. In Canis lupus familiaris (Dog), this protein is 3 beta-hydroxysteroid dehydrogenase/Delta 5--&gt;4-isomerase (HSD3B).